Reading from the N-terminus, the 116-residue chain is Ribonuclease P protein component (116 aa).

Belongs to the RnpA family. Consists of a catalytic RNA component (M1 or rnpB) and a protein subunit.

The catalysed reaction is Endonucleolytic cleavage of RNA, removing 5'-extranucleotides from tRNA precursor.. In terms of biological role, RNaseP catalyzes the removal of the 5'-leader sequence from pre-tRNA to produce the mature 5'-terminus. It can also cleave other RNA substrates such as 4.5S RNA. The protein component plays an auxiliary but essential role in vivo by binding to the 5'-leader sequence and broadening the substrate specificity of the ribozyme. In Citrifermentans bemidjiense (strain ATCC BAA-1014 / DSM 16622 / JCM 12645 / Bem) (Geobacter bemidjiensis), this protein is Ribonuclease P protein component.